The chain runs to 976 residues: Chloride channel protein 1 (976 aa).

Over 1-118 the chain is Cytoplasmic; the sequence is MQPSQSLRRG…VVRRKLGEDW (118 aa). A disordered region spans residues 71-92; sequence DKEQDTGMSKKMGSSESMDSKD. Positions 77–87 are enriched in low complexity; sequence GMSKKMGSSES. The helical transmembrane segment at 119-150 threads the bilayer; that stretch reads IFLVLLGLLMALVSWSMDYVSAKSLQAYKWSY. Residues 151 to 158 lie on the Extracellular side of the membrane; that stretch reads YQMQPNLP. The helical transmembrane segment at 159 to 179 threads the bilayer; the sequence is LQYLVWVTFPLTLILFSAVFC. The Cytoplasmic segment spans residues 180–183; that stretch reads HLIS. Positions 184-189 form an intramembrane region, note=Loop between two helices; that stretch reads PQAVGS. Residues 188–192 carry the Selectivity filter part_1 motif; the sequence is GSGIP. S189 is a chloride binding site. An intramembrane region (helical) is located at residues 190-195; that stretch reads GIPEMK. Residues 196–208 lie on the Cytoplasmic side of the membrane; sequence TILRGVILKEYLT. Residues 209-224 constitute an intramembrane region (helical); that stretch reads LKAFVAKVVALTAGLG. An intramembrane region (note=Loop between two helices) is located at residues 225–230; that stretch reads SGIPVG. The Selectivity filter part_2 motif lies at 230–234; it reads GKEGP. An intramembrane region (helical) is located at residues 231–246; that stretch reads KEGPFVHIASICAAVL. The Cytoplasmic portion of the chain corresponds to 247 to 268; the sequence is SKFMSMFCGVYEQPYYYTDMLT. 2 consecutive intramembrane regions (helical) follow at residues 269–280 and 281–290; these read VGCAVGVGCCFG and TPLGGVLFSI. The Cytoplasmic segment spans residues 291–301; the sequence is EVTSTYFAVRN. The helical transmembrane segment at 302–321 threads the bilayer; that stretch reads YWRGFFAATFSAFVFRVLAV. At 322–347 the chain is on the extracellular side; the sequence is WNKDAVTITALFRTNFRMDFPFDLQE. The chain crosses the membrane as a helical span at residues 348 to 376; the sequence is LPAFAIIGICCGFLGAVFVYLHRQVMLGV. Topologically, residues 377–390 are cytoplasmic; it reads RKHKALSQFLAKHR. Residues 391–408 traverse the membrane as a helical segment; the sequence is LLYPGIVTFIIASFTFPP. Over 409-414 the chain is Extracellular; the sequence is GIGQFM. The segment at residues 415–418 is an intramembrane region (note=Loop between two helices); that stretch reads AGEL. Positions 419-426 form an intramembrane region, helical; it reads MPREAIST. Over 427-457 the chain is Extracellular; the sequence is LFDNNTWVKHVGDPESLGRSAVWIHPRVNVI. Positions 458–475 form an intramembrane region, helical; sequence IIIFLFFIMKFWMSIVAT. The segment at residues 476–482 is an intramembrane region (note=Loop between two helices); it reads TMPIPCG. The short motif at 482–486 is the Selectivity filter part_3 element; that stretch reads GGFMP. The helical intramembrane region spans 483-498; it reads GFMPVFVLGAAFGRLV. Residue F484 coordinates chloride. Topologically, residues 499-521 are extracellular; sequence GEIMAMLFPDGILFDDIIYKILP. The segment at residues 522–538 is an intramembrane region (helical); it reads GGYAVIGAAALTGAVSH. An intramembrane region (note=Loop between two helices) is located at residues 539–540; the sequence is TV. Residues 541–554 constitute an intramembrane region (helical); it reads STAVICFELTGQIA. Topologically, residues 555-557 are extracellular; that stretch reads HIL. Positions 558-571 form an intramembrane region, helical; it reads PMMVAVILANMVAQ. Positions 572 to 575 form an intramembrane region, note=Loop between two helices; the sequence is SLQP. The segment at residues 576-578 is an intramembrane region (helical); that stretch reads SLY. Y578 provides a ligand contact to chloride. The Cytoplasmic segment spans residues 579–976; it reads DSIIQVKKLP…DEEDEDELIL (398 aa). In terms of domain architecture, CBS 1 spans 609-668; sequence MVRDVKFVSATCTYGELRTLLQTTTVKTLPLVDSKDSMILLGSVERSELQSLLQRHLGPE. The tract at residues 707-759 is disordered; that stretch reads DEDEDEDLSGKPELPPLPPPHPLPSAPLSSEESNGPLPSHKQQPEAPEPADQR. The segment covering 719–731 has biased composition (pro residues); the sequence is ELPPLPPPHPLPS. Residues 816–871 enclose the CBS 2 domain; that stretch reads IDQSPFQLVEQTSLHKTHTLFSLLGLHLAYVTSMGKLRGVLALEELQKAIEGHTKS. The segment at 872-976 is disordered; the sequence is GVQLRPPLAS…DEEDEDELIL (105 aa). S881 bears the Phosphoserine mark. Residues 914–925 show a composition bias toward pro residues; that stretch reads SPEPPAPSPSPA. Composition is skewed to acidic residues over residues 938 to 955 and 967 to 976; these read ELEE…EELA and DEEDEDELIL.

The protein belongs to the chloride channel (TC 2.A.49) family. ClC-1/CLCN1 subfamily. As to quaternary structure, homodimer.

Its subcellular location is the cell membrane. It localises to the sarcolemma. The protein localises to the T-tubule. The enzyme catalyses chloride(in) = chloride(out). The catalysed reaction is thiocyanate(in) = thiocyanate(out). It catalyses the reaction bromide(in) = bromide(out). It carries out the reaction nitrate(in) = nitrate(out). The enzyme catalyses iodide(out) = iodide(in). Modulated by membrane voltage with depolarization favouring channel opening and hyperpolarization favouring channel closure. Inhibited by acidic pH and ATP binding due to a shift of voltage dependence of common gating to more positive voltages. Inhibited by 9-anthracene-carboxylic. Functionally, voltage-gated chloride channel involved in skeletal muscle excitability. Generates most of the plasma membrane chloride conductance in skeletal muscle fibers, stabilizes the resting membrane potential and contributes to the repolarization phase during action potential firing. Forms a homodimeric channel where each subunit has its own ion conduction pathway. Conducts double-barreled currents controlled by two types of gates, two fast glutamate gates that control each subunit independently and a slow common gate that opens and shuts off both subunits simultaneously. Has a significant open probability at muscle resting potential and is further activated upon membrane depolarization. Permeable to small monovalent anions with ion selectivity for chloride &gt; thiocyanate &gt; bromide &gt; nitrate &gt; iodide. This is Chloride channel protein 1 (CLCN1) from Canis lupus familiaris (Dog).